Here is a 147-residue protein sequence, read N- to C-terminus: Endoribonuclease YbeY (147 aa).

Positions 109, 113, and 119 each coordinate Zn(2+).

Belongs to the endoribonuclease YbeY family. It depends on Zn(2+) as a cofactor.

It is found in the cytoplasm. Its function is as follows. Single strand-specific metallo-endoribonuclease involved in late-stage 70S ribosome quality control and in maturation of the 3' terminus of the 16S rRNA. The polypeptide is Endoribonuclease YbeY (Magnetococcus marinus (strain ATCC BAA-1437 / JCM 17883 / MC-1)).